The primary structure comprises 386 residues: 1-deoxy-D-xylulose 5-phosphate reductoisomerase (386 aa).

Residues Thr-13, Gly-14, Ser-15, Ile-16, Asn-40, and Asn-122 each contribute to the NADPH site. Lys-123 is a 1-deoxy-D-xylulose 5-phosphate binding site. Glu-124 provides a ligand contact to NADPH. Asp-148 serves as a coordination point for Mn(2+). Positions 149, 150, 177, and 201 each coordinate 1-deoxy-D-xylulose 5-phosphate. Residue Glu-150 participates in Mn(2+) binding. Gly-207 contributes to the NADPH binding site. 1-deoxy-D-xylulose 5-phosphate contacts are provided by Ser-214, Asn-219, Lys-220, and Glu-223. Glu-223 provides a ligand contact to Mn(2+).

The protein belongs to the DXR family. The cofactor is Mg(2+). It depends on Mn(2+) as a cofactor.

The enzyme catalyses 2-C-methyl-D-erythritol 4-phosphate + NADP(+) = 1-deoxy-D-xylulose 5-phosphate + NADPH + H(+). The protein operates within isoprenoid biosynthesis; isopentenyl diphosphate biosynthesis via DXP pathway; isopentenyl diphosphate from 1-deoxy-D-xylulose 5-phosphate: step 1/6. Catalyzes the NADPH-dependent rearrangement and reduction of 1-deoxy-D-xylulose-5-phosphate (DXP) to 2-C-methyl-D-erythritol 4-phosphate (MEP). This chain is 1-deoxy-D-xylulose 5-phosphate reductoisomerase, found in Francisella tularensis subsp. holarctica (strain OSU18).